We begin with the raw amino-acid sequence, 790 residues long: Nuclear cap-binding protein subunit 1 (790 aa).

Positions 1-26 (MSRRRHSYENDGGQPHKRRKTSDANE) are disordered. Residues 3–20 (RRRHSYENDGGQPHKRRK) carry the Nuclear localization signal motif. Residue Ser-7 is modified to Phosphoserine. Thr-21 bears the Phosphothreonine mark. Phosphoserine occurs at positions 22 and 201. Residues 28–240 (EDHLESLICK…CLWAQIQKLK (213 aa)) form the MIF4G domain. Lys-204 carries the post-translational modification N6-acetyllysine. The stretch at 643 to 713 (STIRKMNKHV…SEQKNLFLVI (71 aa)) forms a coiled coil. A disordered region spans residues 666–685 (LARQHKRRSDDDDRSSDRKD). Lys-684 is covalently cross-linked (Glycyl lysine isopeptide (Lys-Gly) (interchain with G-Cter in SUMO2)). Lys-698 is subject to N6-acetyllysine.

The protein belongs to the NCBP1 family. As to quaternary structure, component of the nuclear cap-binding complex (CBC), a heterodimer composed of NCBP1/CBP80 and NCBP2/CBP20 that interacts with m7GpppG-capped RNA. Found in a U snRNA export complex containing PHAX/RNUXA, NCBP1/CBP80, NCBP2/CBP20, RAN, XPO1 and m7G-capped RNA. Identified in a IGF2BP1-dependent mRNP granule complex containing untranslated mRNAs. Interacts with PHAX/RNUXA, SRRT/ARS2, EIF4G2, IGF2BP1, HNRNPF, HNRNPH1, KIAA0427/CTIF, PARN, DROSHA, UPF1 and ALYREF/THOC4. May interact with EIF4G1; the interaction is however controversial. The large PER complex involved in the repression of transcriptional termination is composed of at least PER2, CDK9, DDX5, DHX9, NCBP1/CBP80 and POLR2A (active). Component of an alternative nuclear cap-binding complex (CBC) composed of NCBP1/CBP80 and NCBP3. Interacts with METTL3. Interacts with ZFC3H1 in a RNase-insensitive manner. Interacts with MTREX. Interacts with TASOR. Interacts with DHX34; the interaction is RNA-dependent. Interacts with KPNA3. In terms of processing, dephosphorylated at Thr-21 by the PNUTS-PP1 complex during RNA polymerase II transcription pause-release. As to expression, expressed in the spermatogonia, spermatocytes and granular cells within the cerebellum.

The protein localises to the nucleus. Its subcellular location is the cytoplasm. Its function is as follows. Component of the cap-binding complex (CBC), which binds cotranscriptionally to the 5'-cap of pre-mRNAs and is involved in various processes such as pre-mRNA splicing, translation regulation, nonsense-mediated mRNA decay, RNA-mediated gene silencing (RNAi) by microRNAs (miRNAs) and mRNA export. The CBC complex is involved in mRNA export from the nucleus via its interaction with ALYREF/THOC4/ALY, leading to the recruitment of the mRNA export machinery to the 5'-end of mRNA and to mRNA export in a 5' to 3' direction through the nuclear pore. The CBC complex is also involved in mediating U snRNA and intronless mRNAs export from the nucleus. The CBC complex is essential for a pioneer round of mRNA translation, before steady state translation when the CBC complex is replaced by cytoplasmic cap-binding protein eIF4E. The pioneer round of mRNA translation mediated by the CBC complex plays a central role in nonsense-mediated mRNA decay (NMD), NMD only taking place in mRNAs bound to the CBC complex, but not on eIF4E-bound mRNAs. The CBC complex enhances NMD in mRNAs containing at least one exon-junction complex (EJC) via its interaction with UPF1, promoting the interaction between UPF1 and UPF2. The CBC complex is also involved in 'failsafe' NMD, which is independent of the EJC complex, while it does not participate in Staufen-mediated mRNA decay (SMD). During cell proliferation, the CBC complex is also involved in microRNAs (miRNAs) biogenesis via its interaction with SRRT/ARS2 and is required for miRNA-mediated RNA interference. The CBC complex also acts as a negative regulator of PARN, thereby acting as an inhibitor of mRNA deadenylation. In the CBC complex, NCBP1/CBP80 does not bind directly capped RNAs (m7GpppG-capped RNA) but is required to stabilize the movement of the N-terminal loop of NCBP2/CBP20 and lock the CBC into a high affinity cap-binding state with the cap structure. Associates with NCBP3 to form an alternative cap-binding complex (CBC) which plays a key role in mRNA export and is particularly important in cellular stress situations such as virus infections. The conventional CBC with NCBP2 binds both small nuclear RNA (snRNA) and messenger (mRNA) and is involved in their export from the nucleus whereas the alternative CBC with NCBP3 does not bind snRNA and associates only with mRNA thereby playing a role only in mRNA export. NCBP1/CBP80 is required for cell growth and viability. This Mus musculus (Mouse) protein is Nuclear cap-binding protein subunit 1 (Ncbp1).